We begin with the raw amino-acid sequence, 202 residues long: Histone chaperone ASF1B (202 aa).

Residues 1–155 form an interaction with CHAF1B region; that stretch reads MAKVSVLNVA…VTRFHINWDN (155 aa). The interaction with histone H3 stretch occupies residues 1–156; sequence MAKVSVLNVA…TRFHINWDNN (156 aa). Position 198 is a phosphoserine; by TLK2 (serine 198).

This sequence belongs to the ASF1 family. As to quaternary structure, interacts with histone H3 (via C-terminus), including histone H3.1, H3.2 and H3.3, and histone H4; the interaction with H3 is direct. Interacts with the CHAF1A, CHAF1B and RBBP4 subunits of the CAF-1 complex. Interacts with HAT1, NASP and TAF1. Found in a soluble complex with NASP and histones H3 and H4; the interaction with NASP is probably indirect and mediated by H3-H4. Interacts with CDAN1. Found in a cytosolic complex with IPO4 and histones H3 and H4. Interacts with CREBBP. Phosphorylated by TLK1 and TLK2. Highly expressed in testis and at lower levels in colon, small intestine and thymus.

Its subcellular location is the nucleus. The protein resides in the cytoplasm. It is found in the cytosol. In terms of biological role, histone chaperone that facilitates histone deposition and histone exchange and removal during nucleosome assembly and disassembly. Cooperates with chromatin assembly factor 1 (CAF-1) to promote replication-dependent chromatin assembly. Also involved in the nuclear import of the histone H3-H4 dimer together with importin-4 (IPO4): specifically recognizes and binds newly synthesized histones with the monomethylation of H3 'Lys-9' (H3K9me1) and diacetylation at 'Lys-5' and 'Lys-12' of H4 (H4K5K12ac) marks in the cytosol. Does not participate in replication-independent nucleosome deposition which is mediated by ASF1A and HIRA. Required for gonad development. This Homo sapiens (Human) protein is Histone chaperone ASF1B.